The primary structure comprises 158 residues: Transcription antitermination protein NusB (158 aa).

Residues 1–13 show a composition bias toward polar residues; the sequence is MSEAGDTSPQPGK. The segment at 1 to 24 is disordered; that stretch reads MSEAGDTSPQPGKTGQPKAGDRRR.

The protein belongs to the NusB family.

In terms of biological role, involved in transcription antitermination. Required for transcription of ribosomal RNA (rRNA) genes. Binds specifically to the boxA antiterminator sequence of the ribosomal RNA (rrn) operons. In Marinobacter nauticus (strain ATCC 700491 / DSM 11845 / VT8) (Marinobacter aquaeolei), this protein is Transcription antitermination protein NusB.